A 496-amino-acid chain; its full sequence is Nitric oxide synthase, inducible (496 aa).

The FMN site is built by Cys6, Glu32, and Gln36. One can recognise an FAD-binding FR-type domain in the interval 101–341 (KNLFTMRLRS…VRSVSGFQLP (241 aa)). Arg121 contributes to the NADP(+) binding site. Residues His143, Arg277, Tyr279, Ser280, Thr295, and Ala297 each contribute to the FAD site. Thr300 contacts NADP(+). 4 residues coordinate FAD: Tyr301, Val314, Cys315, and Ser316. Thr355, Arg388, Ser417, Arg418, Lys424, Tyr426, Gln428, and Asp461 together coordinate NADP(+).

The protein belongs to the NOS family. In terms of assembly, homodimer. Interacts with NHERF1. Interacts with GAPDH; induced by oxidatively-modified low-densitity lipoprotein (LDL(ox)). Interacts with S100A8 and S100A9 to form the iNOS-S100A8/9 transnitrosylase complex. Interacts with SPSB1, SPSB2 and SPSB4. Interacts with ELOC and CUL5 in the presence of SPSB1 or SPSB2 or SPSB4. Forms a complex with ASL, ASS1 and HSP90AA1; the complex regulates cell-autonomous L-arginine synthesis and citrulline recycling while channeling extracellular L-arginine to nitric oxide synthesis pathway. Heme b is required as a cofactor. Requires FAD as cofactor. The cofactor is FMN. It depends on (6R)-L-erythro-5,6,7,8-tetrahydrobiopterin as a cofactor. In terms of processing, polyubiquitinated; mediated by SPSB1, SPSB2 and SPSB4, leading to proteasomal degradation.

The protein resides in the cytoplasm. The protein localises to the cytosol. It carries out the reaction 2 L-arginine + 3 NADPH + 4 O2 + H(+) = 2 L-citrulline + 2 nitric oxide + 3 NADP(+) + 4 H2O. Its activity is regulated as follows. Not stimulated by calcium/calmodulin. Produces nitric oxide (NO) which is a messenger molecule with diverse functions throughout the body. In macrophages, NO mediates tumoricidal and bactericidal actions. Also has nitrosylase activity and mediates cysteine S-nitrosylation of cytoplasmic target proteins such PTGS2/COX2. As component of the iNOS-S100A8/9 transnitrosylase complex involved in the selective inflammatory stimulus-dependent S-nitrosylation of GAPDH implicated in regulation of the GAIT complex activity and probably multiple targets including ANXA5, EZR, MSN and VIM. Involved in inflammation, enhances the synthesis of pro-inflammatory mediators such as IL6 and IL8. This Oryctolagus cuniculus (Rabbit) protein is Nitric oxide synthase, inducible (NOS2).